Consider the following 540-residue polypeptide: DEAD-box ATP-dependent RNA helicase 57 (540 aa).

The tract at residues 24-73 (DFARFRQGPPAPDVASAAAPSPEKKRKRQSKAKAKKSKKRRAEGADSASD) is disordered. The span at 47 to 64 (KKRKRQSKAKAKKSKKRR) shows a compositional bias: basic residues. A coiled-coil region spans residues 101 to 129 (KSEDSEVVRRRKEVEREIERAAILRKKFD). The Q motif motif lies at 146–174 (ELVSRYGCDSYLVGNLSKLGFQEPTPIQR). The region spanning 177–347 (IPILLSGREC…RTIMHDAVRV (171 aa)) is the Helicase ATP-binding domain. Residue 190–197 (APTGSGKT) participates in ATP binding. The DEAD box signature appears at 294–297 (DESD). Residues 375 to 519 (ALRQSFAESL…EVPSWIKALP (145 aa)) enclose the Helicase C-terminal domain.

It belongs to the DEAD box helicase family. DDX52/ROK1 subfamily.

The catalysed reaction is ATP + H2O = ADP + phosphate + H(+). The chain is DEAD-box ATP-dependent RNA helicase 57 from Oryza sativa subsp. japonica (Rice).